We begin with the raw amino-acid sequence, 158 residues long: C-type lectin BML-2 (158 aa).

An N-terminal signal peptide occupies residues 1-23 (MGHFTFTGLCLLAMFLSLRGAEC). 4 disulfide bridges follow: cysteine 26–cysteine 37, cysteine 54–cysteine 154, cysteine 61–cysteine 156, and cysteine 129–cysteine 146. Residues 33–155 (KNGLCYKVFS…CESLHPFLCQ (123 aa)) form the C-type lectin domain. Residues 119-121 (EPN) carry the Mannose-binding motif. A glycan (N-linked (GlcNAc...) asparagine) is linked at asparagine 121. Residues glutamate 127, asparagine 142, and aspartate 143 each contribute to the Ca(2+) site.

This sequence belongs to the true venom lectin family. As to quaternary structure, dimer. Probably non-covalently linked. As to expression, expressed by the venom gland.

The protein localises to the secreted. Recombinant C-type lectin BML-2 is able to agglutinate erythrocytes. May be a calcium-dependent lectin. The sequence is that of C-type lectin BML-2 from Bungarus multicinctus (Many-banded krait).